A 315-amino-acid chain; its full sequence is Malate dehydrogenase (315 aa).

9-15 (GGSGNVG) is an NAD(+) binding site. R84 and R90 together coordinate substrate. Residues N97 and 120–122 (VSN) contribute to the NAD(+) site. Residues N122 and R153 each coordinate substrate. H177 acts as the Proton acceptor in catalysis.

This sequence belongs to the LDH/MDH superfamily.

It catalyses the reaction (S)-malate + NAD(+) = oxaloacetate + NADH + H(+). In terms of biological role, catalyzes the reversible oxidation of malate to oxaloacetate. This is Malate dehydrogenase from Helicobacter hepaticus (strain ATCC 51449 / 3B1).